A 317-amino-acid chain; its full sequence is Carbonic anhydrase 5B, mitochondrial (317 aa).

Residues 1 to 33 constitute a mitochondrion transit peptide; it reads MAVMNHLRVILQVSSSTLPWRRCWVPRLVPRRS. The 260-residue stretch at 37–296 folds into the Alpha-carbonic anhydrase domain; the sequence is YTCTYRTRNR…LMNRTVRSSF (260 aa). Residues His-130, His-132, and His-155 each coordinate Zn(2+). Residue 235–236 participates in substrate binding; that stretch reads TT.

The protein belongs to the alpha-carbonic anhydrase family. Requires Zn(2+) as cofactor. As to expression, expressed in the heart, liver, lung, kidney, testis, and skeletal muscle (at protein level).

The protein localises to the mitochondrion. The enzyme catalyses hydrogencarbonate + H(+) = CO2 + H2O. In terms of biological role, mitochondrial carbonic anhydrase that catalyzes the reversible conversion of carbon dioxide to bicarbonate/HCO3. The polypeptide is Carbonic anhydrase 5B, mitochondrial (Ca5b) (Mus musculus (Mouse)).